A 193-amino-acid polypeptide reads, in one-letter code: Endoribonuclease YbeY (193 aa).

Residues histidine 109, histidine 113, and histidine 119 each coordinate Zn(2+). Residues 143–193 are disordered; sequence GAALREGRREGRAGEAKDRWTRSPTSISTPSRSGSTARGSRAKTSRAGSRT. Positions 147-163 are enriched in basic and acidic residues; that stretch reads REGRREGRAGEAKDRWT. Low complexity predominate over residues 164–181; it reads RSPTSISTPSRSGSTARG.

This sequence belongs to the endoribonuclease YbeY family. Zn(2+) is required as a cofactor.

Its subcellular location is the cytoplasm. Its function is as follows. Single strand-specific metallo-endoribonuclease involved in late-stage 70S ribosome quality control and in maturation of the 3' terminus of the 16S rRNA. This chain is Endoribonuclease YbeY, found in Anaeromyxobacter dehalogenans (strain 2CP-C).